A 389-amino-acid polypeptide reads, in one-letter code: NADH-quinone oxidoreductase subunit D (389 aa).

This sequence belongs to the complex I 49 kDa subunit family. NDH-1 is composed of 14 different subunits. Subunits NuoB, C, D, E, F, and G constitute the peripheral sector of the complex.

It localises to the cell inner membrane. It catalyses the reaction a quinone + NADH + 5 H(+)(in) = a quinol + NAD(+) + 4 H(+)(out). Functionally, NDH-1 shuttles electrons from NADH, via FMN and iron-sulfur (Fe-S) centers, to quinones in the respiratory chain. The immediate electron acceptor for the enzyme in this species is believed to be ubiquinone. Couples the redox reaction to proton translocation (for every two electrons transferred, four hydrogen ions are translocated across the cytoplasmic membrane), and thus conserves the redox energy in a proton gradient. The protein is NADH-quinone oxidoreductase subunit D of Citrifermentans bemidjiense (strain ATCC BAA-1014 / DSM 16622 / JCM 12645 / Bem) (Geobacter bemidjiensis).